The sequence spans 626 residues: Phosphomethylpyrimidine synthase (626 aa).

The interval 1–22 (MTKQEKAINLSESAQVDQQSVQ) is disordered. Polar residues predominate over residues 10–22 (LSESAQVDQQSVQ). Substrate-binding positions include asparagine 232, methionine 261, tyrosine 290, histidine 326, 346–348 (SRG), 387–390 (DGLR), and glutamate 426. Zn(2+) is bound at residue histidine 430. Tyrosine 453 is a binding site for substrate. Histidine 494 contributes to the Zn(2+) binding site. 3 residues coordinate [4Fe-4S] cluster: cysteine 574, cysteine 577, and cysteine 582.

Belongs to the ThiC family. In terms of assembly, homodimer. [4Fe-4S] cluster is required as a cofactor.

The enzyme catalyses 5-amino-1-(5-phospho-beta-D-ribosyl)imidazole + S-adenosyl-L-methionine = 4-amino-2-methyl-5-(phosphooxymethyl)pyrimidine + CO + 5'-deoxyadenosine + formate + L-methionine + 3 H(+). The protein operates within cofactor biosynthesis; thiamine diphosphate biosynthesis. In terms of biological role, catalyzes the synthesis of the hydroxymethylpyrimidine phosphate (HMP-P) moiety of thiamine from aminoimidazole ribotide (AIR) in a radical S-adenosyl-L-methionine (SAM)-dependent reaction. This Pseudomonas putida (strain ATCC 700007 / DSM 6899 / JCM 31910 / BCRC 17059 / LMG 24140 / F1) protein is Phosphomethylpyrimidine synthase.